Here is a 285-residue protein sequence, read N- to C-terminus: 2,4-didehydro-3-deoxy-L-rhamnonate hydrolase (285 aa).

Leucine 73 provides a ligand contact to pyruvate. Residues glutamate 119, glutamate 121, and aspartate 150 each coordinate Mg(2+). Lysine 168 and threonine 238 together coordinate pyruvate.

It belongs to the FAH family. In terms of assembly, homodimer. The cofactor is Mg(2+).

The enzyme catalyses 2,4-didehydro-3-deoxy-L-rhamnonate + H2O = (S)-lactate + pyruvate + H(+). It functions in the pathway carbohydrate degradation; L-rhamnose degradation. Hydrolase that catalyzes the hydrolysis of 2,4-didehydro-3-deoxy-L-rhamnonate to pyruvate and L-lactate. Can also hydrolyze L-2,4-diketo-3-deoxylyxonate and L-2,4-diketo-3-deoxymannonate. In vitro can also use acylpyruvates such as acetylpyruvate and trimethylacetopyruvate. Catalyzes the fifth (last) step in an alternative pathway for rhamnose utilization that does not involve phosphorylated intermediates. The protein is 2,4-didehydro-3-deoxy-L-rhamnonate hydrolase of Sphingomonas sp. (strain SKA58).